A 107-amino-acid chain; its full sequence is MKTLLLTLVVVTIVCLDLGDSLRCYMGPKTPRTCPPGENLCFTKTWCDPRCSLLGKLVKLGCAATCPIPKSYEDVTCCSTDNCNRFPKWERSRPRPRGLLSSIMDHP.

The first 21 residues, 1–21, serve as a signal peptide directing secretion; sequence MKTLLLTLVVVTIVCLDLGDS. 5 disulfides stabilise this stretch: C24–C41, C34–C62, C47–C51, C66–C77, and C78–C83.

It belongs to the three-finger toxin family. Long-chain subfamily. Type II alpha-neurotoxin sub-subfamily. As to expression, expressed by the venom gland.

It localises to the secreted. Binds with high affinity to muscular (alpha-1/CHRNA1) and neuronal (alpha-7/CHRNA7) nicotinic acetylcholine receptor (nAChR) and inhibits acetylcholine from binding to the receptor, thereby impairing neuromuscular and neuronal transmission. This chain is Alpha-elapitoxin-Al2a, found in Austrelaps labialis (Pygmy copperhead).